The chain runs to 290 residues: Lectin-related protein (290 aa).

The N-terminal stretch at 1 to 36 (ANSNSRPHLLQTQKPFSVVLAISITFYLLLLNKVNS) is a signal peptide. 3 N-linked (GlcNAc...) asparagine glycosylation sites follow: N119, N147, and N152. 2 residues coordinate Mn(2+): E161 and D163. Positions 163, 167, and 170 each coordinate Ca(2+). Positions 170 and 175 each coordinate Mn(2+).

It belongs to the leguminous lectin family. In terms of assembly, homotetramer.

Does not have any carbohydrate binding or agglutination activity. In Cladrastis kentukea (Yellow wood), this protein is Lectin-related protein.